We begin with the raw amino-acid sequence, 198 residues long: Endonuclease V (198 aa).

Residues Asp-38 and Asp-101 each coordinate Mg(2+).

It belongs to the endonuclease V family. The cofactor is Mg(2+).

The protein localises to the cytoplasm. The catalysed reaction is Endonucleolytic cleavage at apurinic or apyrimidinic sites to products with a 5'-phosphate.. Its function is as follows. DNA repair enzyme involved in the repair of deaminated bases. Selectively cleaves double-stranded DNA at the second phosphodiester bond 3' to a deoxyinosine leaving behind the intact lesion on the nicked DNA. This is Endonuclease V from Saccharolobus islandicus (strain Y.N.15.51 / Yellowstone #2) (Sulfolobus islandicus).